Consider the following 308-residue polypeptide: CASP-like protein 4A2 (308 aa).

Residues 1 to 135 (MALEAQPSPS…APAPAPRVPA (135 aa)) form a disordered region. The Cytoplasmic segment spans residues 1–161 (MALEAQPSPS…KRPTAVLQRT (161 aa)). Residues 22–31 (GGAGAPGGSA) show a composition bias toward gly residues. Over residues 32 to 44 (GDADAQARRATSG) the composition is skewed to low complexity. 2 stretches are compositionally biased toward pro residues: residues 54–65 (RRSPPPPFPRTP) and 89–132 (FQPP…PAPR). The chain crosses the membrane as a helical span at residues 162 to 182 (ALVARVAAALLCLAALAVLAA). The Extracellular segment spans residues 183–203 (DSRKGFALDSYSNYSQLRYSE). Residue Asn-195 is glycosylated (N-linked (GlcNAc...) asparagine). The chain crosses the membrane as a helical span at residues 204-224 (AVNVIGFVYSVLQFFVLADLM). At 225–240 (RRNKHLNPRRKGDYFD) the chain is on the cytoplasmic side. The chain crosses the membrane as a helical span at residues 241–262 (FFMDQVLAYLLISSSSSATARV). Topologically, residues 263 to 280 (GDWIDNWGSDPFPKMANS) are extracellular. A glycan (N-linked (GlcNAc...) asparagine) is linked at Asn-279. Residues 281-301 (SIAISFMAFLVFAISALISAY) traverse the membrane as a helical segment. Topologically, residues 302–308 (NLFRRDI) are cytoplasmic.

It belongs to the Casparian strip membrane proteins (CASP) family. In terms of assembly, homodimer and heterodimers.

It is found in the cell membrane. The protein is CASP-like protein 4A2 of Oryza sativa subsp. japonica (Rice).